The chain runs to 425 residues: 5-methylthioadenosine/S-adenosylhomocysteine deaminase (425 aa).

Positions 63 and 65 each coordinate Zn(2+). 2 residues coordinate substrate: E92 and H184. H211 contacts Zn(2+). Substrate contacts are provided by E214 and D299. D299 lines the Zn(2+) pocket.

This sequence belongs to the metallo-dependent hydrolases superfamily. MTA/SAH deaminase family. Zn(2+) is required as a cofactor.

The catalysed reaction is S-adenosyl-L-homocysteine + H2O + H(+) = S-inosyl-L-homocysteine + NH4(+). It catalyses the reaction S-methyl-5'-thioadenosine + H2O + H(+) = S-methyl-5'-thioinosine + NH4(+). Functionally, catalyzes the deamination of 5-methylthioadenosine and S-adenosyl-L-homocysteine into 5-methylthioinosine and S-inosyl-L-homocysteine, respectively. Is also able to deaminate adenosine. The protein is 5-methylthioadenosine/S-adenosylhomocysteine deaminase of Pyrococcus abyssi (strain GE5 / Orsay).